A 248-amino-acid polypeptide reads, in one-letter code: 3-deoxy-manno-octulosonate cytidylyltransferase (248 aa).

This sequence belongs to the KdsB family.

It is found in the cytoplasm. It carries out the reaction 3-deoxy-alpha-D-manno-oct-2-ulosonate + CTP = CMP-3-deoxy-beta-D-manno-octulosonate + diphosphate. It participates in nucleotide-sugar biosynthesis; CMP-3-deoxy-D-manno-octulosonate biosynthesis; CMP-3-deoxy-D-manno-octulosonate from 3-deoxy-D-manno-octulosonate and CTP: step 1/1. Its pathway is bacterial outer membrane biogenesis; lipopolysaccharide biosynthesis. Activates KDO (a required 8-carbon sugar) for incorporation into bacterial lipopolysaccharide in Gram-negative bacteria. The chain is 3-deoxy-manno-octulosonate cytidylyltransferase from Shigella dysenteriae serotype 1 (strain Sd197).